The sequence spans 302 residues: Diacetylchitobiose uptake system permease protein NgcG (302 aa).

6 helical membrane passes run 40–60, 99–119, 131–151, 166–186, 221–241, and 268–288; these read LLIL…MSSF, VIVV…CAYV, IYYV…VPLF, LILT…YSFF, AAVA…PVAL, and GALF…YCVF. Positions 95–288 constitute an ABC transmembrane type-1 domain; the sequence is FLNSVIVVVS…VPVLLVYCVF (194 aa).

The protein belongs to the binding-protein-dependent transport system permease family. As to quaternary structure, the complex is composed of two ATP-binding proteins (MsiK), two transmembrane proteins (NgcF and NgcG) and a solute-binding protein (NgcE).

It is found in the cell membrane. Functionally, part of the ABC transporter complex NgcEFG-MsiK involved in N,N'-diacetylchitobiose ((GlcNAc)2) uptake. Responsible for the translocation of the substrate across the membrane. The chain is Diacetylchitobiose uptake system permease protein NgcG from Streptomyces coelicolor (strain ATCC BAA-471 / A3(2) / M145).